The following is a 283-amino-acid chain: Polyamine aminopropyltransferase (283 aa).

In terms of domain architecture, PABS spans 5–238 (TTWIDEYQKG…GIWSWTFASK (234 aa)). Gln-32 lines the S-methyl-5'-thioadenosine pocket. The spermidine site is built by His-63 and Asp-87. Residues Glu-107 and 139 to 140 (DG) contribute to the S-methyl-5'-thioadenosine site. Catalysis depends on Asp-158, which acts as the Proton acceptor. A spermidine-binding site is contributed by 158–161 (DCSD).

Belongs to the spermidine/spermine synthase family. In terms of assembly, homodimer or homotetramer.

It is found in the cytoplasm. The enzyme catalyses S-adenosyl 3-(methylsulfanyl)propylamine + putrescine = S-methyl-5'-thioadenosine + spermidine + H(+). The protein operates within amine and polyamine biosynthesis; spermidine biosynthesis; spermidine from putrescine: step 1/1. Functionally, catalyzes the irreversible transfer of a propylamine group from the amino donor S-adenosylmethioninamine (decarboxy-AdoMet) to putrescine (1,4-diaminobutane) to yield spermidine. This Prochlorococcus marinus (strain MIT 9515) protein is Polyamine aminopropyltransferase.